The chain runs to 269 residues: Ribosomal RNA small subunit methyltransferase A (269 aa).

The S-adenosyl-L-methionine site is built by isoleucine 17, glycine 42, glutamate 64, aspartate 89, and asparagine 109.

This sequence belongs to the class I-like SAM-binding methyltransferase superfamily. rRNA adenine N(6)-methyltransferase family. RsmA subfamily.

It localises to the cytoplasm. The enzyme catalyses adenosine(1518)/adenosine(1519) in 16S rRNA + 4 S-adenosyl-L-methionine = N(6)-dimethyladenosine(1518)/N(6)-dimethyladenosine(1519) in 16S rRNA + 4 S-adenosyl-L-homocysteine + 4 H(+). Functionally, specifically dimethylates two adjacent adenosines (A1518 and A1519) in the loop of a conserved hairpin near the 3'-end of 16S rRNA in the 30S particle. May play a critical role in biogenesis of 30S subunits. The chain is Ribosomal RNA small subunit methyltransferase A from Anaplasma phagocytophilum (strain HZ).